Reading from the N-terminus, the 638-residue chain is Threonine--tRNA ligase (638 aa).

One can recognise a TGS domain in the interval Met-1–Thr-62. Residues Asp-246–Pro-537 are catalytic. Positions 337, 388, and 514 each coordinate Zn(2+).

Belongs to the class-II aminoacyl-tRNA synthetase family. Homodimer. Zn(2+) serves as cofactor.

It localises to the cytoplasm. It carries out the reaction tRNA(Thr) + L-threonine + ATP = L-threonyl-tRNA(Thr) + AMP + diphosphate + H(+). Functionally, catalyzes the attachment of threonine to tRNA(Thr) in a two-step reaction: L-threonine is first activated by ATP to form Thr-AMP and then transferred to the acceptor end of tRNA(Thr). Also edits incorrectly charged L-seryl-tRNA(Thr). In Leptospira interrogans serogroup Icterohaemorrhagiae serovar copenhageni (strain Fiocruz L1-130), this protein is Threonine--tRNA ligase.